Consider the following 603-residue polypeptide: Protein SHORT-ROOT 2 (603 aa).

Disordered regions lie at residues 11–58 (HHHH…HSHS) and 106–140 (DFSSSSSSRQFHSGTGAPSSAPVPPPPSATTSSAG). The segment covering 31 to 44 (SYPSSRGSTSSPSS) has biased composition (low complexity). Positions 45–58 (HHTHNHTYYHHSHS) are enriched in basic residues. Low complexity predominate over residues 108 to 125 (SSSSSSRQFHSGTGAPSS). Residues 179–602 (AAPSSSGRWA…QPVVWASAWK (424 aa)) form the GRAS domain. The interval 186–249 (RWAAQLLMEC…LTTSGPRTLR (64 aa)) is leucine repeat I (LRI). The segment at 268-354 (ALKFQELSPW…DTPHLSITTV (87 aa)) is VHIID. The short motif at 318–322 (LHILD) is the VHIID element. The tract at residues 370 to 406 (EIGQRLEKFARLMGVPFSFRAVHHAGDLADLDLAALD) is leucine repeat II (LRII). Residues 416-514 (LAVNCVNALR…ERAVGRAIVD (99 aa)) form a PFYRE region. An SAW region spans residues 517 to 602 (SCPASQSAER…QPVVWASAWK (86 aa)).

It belongs to the GRAS family. As to quaternary structure, does not interact with SCR1.

The protein resides in the nucleus. Its function is as follows. Putative transcription factor involved in asymmetric cell division. This Oryza sativa subsp. indica (Rice) protein is Protein SHORT-ROOT 2 (SHR2).